We begin with the raw amino-acid sequence, 195 residues long: Thymidine kinase (195 aa).

ATP-binding positions include 15–22, Glu23, 57–58, and 88–91; these read GPMYSGKS, SH, and DEVQ. Glu89 functions as the Proton acceptor in the catalytic mechanism. Residue Phe120 coordinates substrate. 2 residues coordinate Zn(2+): Cys145 and Cys148. Tyr179 provides a ligand contact to substrate. Residues Cys183 and Cys186 each coordinate Zn(2+).

Belongs to the thymidine kinase family.

It localises to the cytoplasm. The enzyme catalyses thymidine + ATP = dTMP + ADP + H(+). This Clostridium acetobutylicum (strain ATCC 824 / DSM 792 / JCM 1419 / IAM 19013 / LMG 5710 / NBRC 13948 / NRRL B-527 / VKM B-1787 / 2291 / W) protein is Thymidine kinase.